The primary structure comprises 293 residues: NAD kinase (293 aa).

Catalysis depends on aspartate 74, which acts as the Proton acceptor. NAD(+)-binding positions include 74-75 (DG), arginine 79, 148-149 (NE), arginine 176, aspartate 178, 189-194 (TAYALS), and glutamine 248.

Belongs to the NAD kinase family. A divalent metal cation is required as a cofactor.

Its subcellular location is the cytoplasm. It carries out the reaction NAD(+) + ATP = ADP + NADP(+) + H(+). Functionally, involved in the regulation of the intracellular balance of NAD and NADP, and is a key enzyme in the biosynthesis of NADP. Catalyzes specifically the phosphorylation on 2'-hydroxyl of the adenosine moiety of NAD to yield NADP. The protein is NAD kinase of Blochmanniella floridana.